The chain runs to 240 residues: Aliphatic sulfonates import ATP-binding protein SsuB (240 aa).

Residues 6 to 227 enclose the ABC transporter domain; sequence IQLSKLRKNF…VKDRHFACFE (222 aa). Residue 38 to 45 participates in ATP binding; it reads GESGCGKS.

Belongs to the ABC transporter superfamily. Aliphatic sulfonates importer (TC 3.A.1.17.2) family. As to quaternary structure, the complex is composed of two ATP-binding proteins (SsuB), two transmembrane proteins (SsuC) and a solute-binding protein (SsuA).

It is found in the cell inner membrane. The enzyme catalyses ATP + H2O + aliphatic sulfonate-[sulfonate-binding protein]Side 1 = ADP + phosphate + aliphatic sulfonateSide 2 + [sulfonate-binding protein]Side 1.. Part of the ABC transporter complex SsuABC involved in aliphatic sulfonates import. Responsible for energy coupling to the transport system. This Zymomonas mobilis subsp. mobilis (strain ATCC 31821 / ZM4 / CP4) protein is Aliphatic sulfonates import ATP-binding protein SsuB.